A 340-amino-acid chain; its full sequence is MTDHALLLVNLGSPASTSVADVRSYLNQFLMDPYVIDLPWPVRRLLVSLILIKRPAQSAHAYASIWWDEGSPLVVLSRRLQQQMTAQWTQGPVELAMRYGEPSIESVLTRLAGQGISKVTLAPLYPQFADSTVTTVIEEARRVVRDKQLDLQFSILQPFYDQPEYLDALVASARPHLQQDYDHLLFSFHGLPERHLNKLNPGHSLEGSGDCCANASPEVRTTCYRGQCFSVARDFAARMGLPDDKWSVAFQSRLGRAKWIEPYTEARLEALAQQGVKKLLVMCPAFVADCIETLEEIGDRGLEQFREAGGEELVLVPCLNDDPQWAVALNTLCERAPVSL.

The Fe cation site is built by His-189 and Glu-292.

The protein belongs to the ferrochelatase family.

Its subcellular location is the cytoplasm. It catalyses the reaction heme b + 2 H(+) = protoporphyrin IX + Fe(2+). It participates in porphyrin-containing compound metabolism; protoheme biosynthesis; protoheme from protoporphyrin-IX: step 1/1. In terms of biological role, catalyzes the ferrous insertion into protoporphyrin IX. The polypeptide is Ferrochelatase (Pseudomonas fluorescens biotype C).